The chain runs to 843 residues: Protein P (843 aa).

The interval 1–177 (MPLSYQHFRK…FCGSPYSWEQ (177 aa)) is terminal protein domain (TP). A spacer region spans residues 178–346 (ELQHGRLVFQ…YCLTHIVNLL (169 aa)). Disordered regions lie at residues 220–273 (QSRL…SSTS) and 289–316 (LSTS…RSQS). Positions 289-299 (LSTSKRQSSSG) are enriched in polar residues. The segment at 347 to 690 (EDWGPCTEHG…YLNLYPVARQ (344 aa)) is polymerase/reverse transcriptase domain (RT). Residues 357-600 (EHNIRIPRTP…YSLNFMGYVI (244 aa)) form the Reverse transcriptase domain. Positions 429, 551, and 552 each coordinate Mg(2+).

It belongs to the hepadnaviridae P protein family.

The enzyme catalyses DNA(n) + a 2'-deoxyribonucleoside 5'-triphosphate = DNA(n+1) + diphosphate. The catalysed reaction is Endonucleolytic cleavage to 5'-phosphomonoester.. Activated by host HSP70 and HSP40 in vitro to be able to bind the epsilon loop of the pgRNA. Because deletion of the RNase H region renders the protein partly chaperone-independent, the chaperones may be needed indirectly to relieve occlusion of the RNA-binding site by this domain. Inhibited by several reverse-transcriptase inhibitors: Lamivudine, Adefovir and Entecavir. In terms of biological role, multifunctional enzyme that converts the viral RNA genome into dsDNA in viral cytoplasmic capsids. This enzyme displays a DNA polymerase activity that can copy either DNA or RNA templates, and a ribonuclease H (RNase H) activity that cleaves the RNA strand of RNA-DNA heteroduplexes in a partially processive 3'- to 5'-endonucleasic mode. Neo-synthesized pregenomic RNA (pgRNA) are encapsidated together with the P protein, and reverse-transcribed inside the nucleocapsid. Initiation of reverse-transcription occurs first by binding the epsilon loop on the pgRNA genome, and is initiated by protein priming, thereby the 5'-end of (-)DNA is covalently linked to P protein. Partial (+)DNA is synthesized from the (-)DNA template and generates the relaxed circular DNA (RC-DNA) genome. After budding and infection, the RC-DNA migrates in the nucleus, and is converted into a plasmid-like covalently closed circular DNA (cccDNA). The activity of P protein does not seem to be necessary for cccDNA generation, and is presumably released from (+)DNA by host nuclear DNA repair machinery. In Hepatitis B virus genotype C subtype ad (isolate Japan/S-179/1988) (HBV-C), this protein is Protein P.